The chain runs to 334 residues: Flotillin-like protein FloA (334 aa).

A helical membrane pass occupies residues 3–23; the sequence is LYLIFLIVVGVVGLVLVGLFL.

The protein belongs to the flotillin-like FloA family. As to quaternary structure, homooligomerizes.

The protein localises to the cell membrane. It is found in the membrane raft. Its function is as follows. Found in functional membrane microdomains (FMM) that may be equivalent to eukaryotic membrane rafts. FMMs are highly dynamic and increase in number as cells age. Flotillins are thought to be important factors in membrane fluidity. The protein is Flotillin-like protein FloA of Opitutus terrae (strain DSM 11246 / JCM 15787 / PB90-1).